The sequence spans 491 residues: Probable cytosol aminopeptidase (491 aa).

Residues lysine 264 and aspartate 269 each coordinate Mn(2+). Lysine 276 is an active-site residue. Mn(2+) is bound by residues aspartate 287, aspartate 346, and glutamate 348. Arginine 350 is an active-site residue.

It belongs to the peptidase M17 family. Mn(2+) is required as a cofactor.

The protein localises to the cytoplasm. It catalyses the reaction Release of an N-terminal amino acid, Xaa-|-Yaa-, in which Xaa is preferably Leu, but may be other amino acids including Pro although not Arg or Lys, and Yaa may be Pro. Amino acid amides and methyl esters are also readily hydrolyzed, but rates on arylamides are exceedingly low.. The enzyme catalyses Release of an N-terminal amino acid, preferentially leucine, but not glutamic or aspartic acids.. Its function is as follows. Presumably involved in the processing and regular turnover of intracellular proteins. Catalyzes the removal of unsubstituted N-terminal amino acids from various peptides. This is Probable cytosol aminopeptidase from Xylella fastidiosa (strain 9a5c).